The primary structure comprises 640 residues: Protein cereblon (640 aa).

Positions 1 to 11 are enriched in acidic residues; it reads MDDEETAEIDE. Disordered regions lie at residues 1 to 25 and 92 to 159; these read MDDE…ELGP and REDP…EAVP. Low complexity predominate over residues 113–137; the sequence is QPAQQEEQASLPYDSPSRASISSRH. The 229-residue stretch at 278 to 506 folds into the Lon N-terminal domain; that stretch reads RMLIFMHQHI…IIDTTLKQES (229 aa). One can recognise a CULT domain in the interval 505-614; sequence ESLFYCRYCN…LAGSSVRIGK (110 aa). Zn(2+) contacts are provided by C510, C513, C579, and C582.

This sequence belongs to the CRBN family. In terms of assembly, likely a component of a DCX (DDB1-CUL4-X-box) protein ligase complex. May interact with pic/DDB1. Ubiquitinated.

The protein resides in the nucleus. Its pathway is protein modification; protein ubiquitination. Its function is as follows. Substrate recognition component of a DCX (DDB1-CUL4-X-box) E3 protein ligase complex that mediates the ubiquitination and subsequent proteasomal degradation of target proteins. Has an essential role in mediating growth by negatively regulating insulin signaling. It also has a role in maintaining presynaptic function in the neuromuscular junction synapses of third-instar larvae. This chain is Protein cereblon, found in Drosophila virilis (Fruit fly).